A 254-amino-acid polypeptide reads, in one-letter code: Ciliary microtubule associated protein 1A (254 aa).

STPGR repeat units lie at residues 180-205 (PGPAAYRQTDVQVTKFKAPQYTMAAR) and 216-241 (PGPGAHSPEKVTMTRPCAPVVSFGIK). The interval 207 to 226 (EPPGDKTLKPGPGAHSPEKV) is disordered.

Belongs to the CIMAP family. As to quaternary structure, microtubule inner protein component of sperm flagellar doublet microtubules.

It is found in the cytoplasm. It localises to the cytoskeleton. Its subcellular location is the flagellum axoneme. Functionally, outer dense fibers are filamentous structures located on the outside of the axoneme in the midpiece and principal piece of the mammalian sperm tail. May help to maintain the passive elastic structures and elastic recoil of the sperm tail. The chain is Ciliary microtubule associated protein 1A (CIMAP1A) from Bos taurus (Bovine).